Reading from the N-terminus, the 940-residue chain is Isoleucine--tRNA ligase (940 aa).

A 'HIGH' region motif is present at residues 58–68 (PYANGSIHIGH). Glu-564 contacts L-isoleucyl-5'-AMP. The short motif at 605–609 (KMSKS) is the 'KMSKS' region element. Lys-608 contributes to the ATP binding site. Zn(2+) contacts are provided by Cys-903, Cys-906, Cys-923, and Cys-926.

Belongs to the class-I aminoacyl-tRNA synthetase family. IleS type 1 subfamily. Monomer. Zn(2+) serves as cofactor.

Its subcellular location is the cytoplasm. It catalyses the reaction tRNA(Ile) + L-isoleucine + ATP = L-isoleucyl-tRNA(Ile) + AMP + diphosphate. Catalyzes the attachment of isoleucine to tRNA(Ile). As IleRS can inadvertently accommodate and process structurally similar amino acids such as valine, to avoid such errors it has two additional distinct tRNA(Ile)-dependent editing activities. One activity is designated as 'pretransfer' editing and involves the hydrolysis of activated Val-AMP. The other activity is designated 'posttransfer' editing and involves deacylation of mischarged Val-tRNA(Ile). This chain is Isoleucine--tRNA ligase, found in Shewanella sediminis (strain HAW-EB3).